We begin with the raw amino-acid sequence, 81 residues long: Putative membrane protein insertion efficiency factor (81 aa).

Positions 61–81 are disordered; it reads NDGGYDPVPPAPSSRTSSIAE.

Belongs to the UPF0161 family.

Its subcellular location is the cell inner membrane. Could be involved in insertion of integral membrane proteins into the membrane. The chain is Putative membrane protein insertion efficiency factor from Pseudomonas putida (strain ATCC 47054 / DSM 6125 / CFBP 8728 / NCIMB 11950 / KT2440).